Here is a 205-residue protein sequence, read N- to C-terminus: Large ribosomal subunit protein uL4 (205 aa).

The disordered stretch occupies residues 45-97; it reads RQGTSAVKNRSAVRGGGKKPWRQKGTGRARQGSIRAPQWRGGGTVFGPTPRSY. The segment covering 60–71 has biased composition (basic residues); it reads GGKKPWRQKGTG.

This sequence belongs to the universal ribosomal protein uL4 family. Part of the 50S ribosomal subunit.

One of the primary rRNA binding proteins, this protein initially binds near the 5'-end of the 23S rRNA. It is important during the early stages of 50S assembly. It makes multiple contacts with different domains of the 23S rRNA in the assembled 50S subunit and ribosome. Functionally, forms part of the polypeptide exit tunnel. This is Large ribosomal subunit protein uL4 from Lactobacillus johnsonii (strain CNCM I-12250 / La1 / NCC 533).